A 446-amino-acid chain; its full sequence is D(1A) dopamine receptor (446 aa).

At 1 to 23 (MRTLNTSTMEGTGLVAERDFSFR) the chain is on the extracellular side. The N-linked (GlcNAc...) asparagine glycan is linked to asparagine 5. The chain crosses the membrane as a helical span at residues 24–49 (ILTACFLSLLILSTLLGNTLVCAAVI). Residues 50–60 (RFRHLRSKVTN) lie on the Cytoplasmic side of the membrane. The helical transmembrane segment at 61-87 (FFVISLAVSDLLVAVLVMPWKAVAEIA) threads the bilayer. Residues 88-96 (GFWPFGSFC) are Extracellular-facing. The cysteines at positions 96 and 186 are disulfide-linked. Residues 97 to 119 (NIWVAFDIMCSTASILNLCVISV) form a helical membrane-spanning segment. The Cytoplasmic segment spans residues 120 to 138 (DRYWAISSPFRYERKMTPK). The helical transmembrane segment at 139 to 163 (AAFILISVAWTLSVLISFIPVQLSW) threads the bilayer. Residues 164–192 (HKAKPTGPSEGNATSLGKTINNCDSSLSR) lie on the Extracellular side of the membrane. Asparagine 175 carries N-linked (GlcNAc...) asparagine glycosylation. A helical membrane pass occupies residues 193–218 (TYAISSSLISFYIPVAIMIVTYTRIY). Over 219–272 (RIAQKQIRRISALERAAVHAKNCQTTTGNGNPMECSQPESSFKMSFKRETKVLK) the chain is Cytoplasmic. Residues 273–299 (TLSVIMGVFVCCWLPFFILNCMVPFCG) form a helical membrane-spanning segment. Over 300–312 (SGETKPFCIDSIT) the chain is Extracellular. Residues 313 to 337 (FDVFVWFGWANSSLNPIIYAFNADF) traverse the membrane as a helical segment. Topologically, residues 338 to 446 (RKAFSTLLGC…PITQNGQHPT (109 aa)) are cytoplasmic. 2 S-palmitoyl cysteine lipidation sites follow: cysteine 347 and cysteine 351.

This sequence belongs to the G-protein coupled receptor 1 family. Interacts with DNAJC14 via its C-terminus. Interacts with DRD2. Interacts with DORIP1.

It is found in the cell membrane. The protein resides in the endoplasmic reticulum membrane. It localises to the cell projection. The protein localises to the cilium membrane. Its subcellular location is the dendrite. It is found in the dendritic spine. Functionally, dopamine receptor whose activity is mediated by G proteins which activate adenylyl cyclase. The polypeptide is D(1A) dopamine receptor (DRD1) (Bos taurus (Bovine)).